Reading from the N-terminus, the 229-residue chain is 2,3-bisphosphoglycerate-dependent phosphoglycerate mutase (229 aa).

Residues 8-15 (RHGKSEWN), 21-22 (TG), Arg-60, 87-90 (ERHY), Lys-98, 114-115 (RR), and 183-184 (GN) each bind substrate. His-9 acts as the Tele-phosphohistidine intermediate in catalysis. Catalysis depends on Glu-87, which acts as the Proton donor/acceptor.

The protein belongs to the phosphoglycerate mutase family. BPG-dependent PGAM subfamily. In terms of assembly, homodimer.

The enzyme catalyses (2R)-2-phosphoglycerate = (2R)-3-phosphoglycerate. It participates in carbohydrate degradation; glycolysis; pyruvate from D-glyceraldehyde 3-phosphate: step 3/5. In terms of biological role, catalyzes the interconversion of 2-phosphoglycerate and 3-phosphoglycerate. The sequence is that of 2,3-bisphosphoglycerate-dependent phosphoglycerate mutase from Nautilia profundicola (strain ATCC BAA-1463 / DSM 18972 / AmH).